Consider the following 621-residue polypeptide: GPI-anchor transamidase component GPAA1 (621 aa).

Over 2–19 (GLLSDPVRRRALARLVLR) the chain is Cytoplasmic. Residues 20–41 (LNAPLCVLSYVAGIAWFLALVF) traverse the membrane as a helical segment. The Lumenal segment spans residues 42-370 (PPLTQRTYMS…LLPGLSRFVS (329 aa)). A 2-acyl-6-[6-phosphoethanolamine-alpha-D-mannosyl-(1-&gt;2)-6-phosphoethanolamine-alpha-D-mannosyl-(1-&gt;6)-2-phosphoethanolamine-alpha-D-mannosyl-(1-&gt;4)-alpha-D-glucosaminyl]-1-(1-radyl,2-acyl-sn-glycero-3-phospho)-1D-myo-inositol is bound by residues Tyr49 and Ser51. A glycan (N-linked (GlcNAc...) asparagine) is linked at Asn203. Residues Cys259 and Cys266 are joined by a disulfide bond. A 2-acyl-6-[6-phosphoethanolamine-alpha-D-mannosyl-(1-&gt;2)-6-phosphoethanolamine-alpha-D-mannosyl-(1-&gt;6)-2-phosphoethanolamine-alpha-D-mannosyl-(1-&gt;4)-alpha-D-glucosaminyl]-1-(1-radyl,2-acyl-sn-glycero-3-phospho)-1D-myo-inositol is bound by residues His354, Gln355, and Ser356. Mg(2+) is bound at residue Gln355. Residues 371–393 (IGLYMPAVGFLLLVLGLKALELW) form a helical membrane-spanning segment. Residues 394–425 (MQLHEAGMGLEEPGGAPGPSVPLPPSQGVGLA) lie on the Cytoplasmic side of the membrane. A helical transmembrane segment spans residues 426–450 (SLVAPLLISQAMGLALYVLPVLGQH). Residues 451–462 (VATQHFPVAEAE) lie on the Lumenal side of the membrane. Residues 463–483 (AVVLTLLAIYAAGLALPHNTH) traverse the membrane as a helical segment. Residues 484–495 (RVVSTQAPDRGW) are Cytoplasmic-facing. The next 2 helical transmembrane spans lie at 496 to 519 (MALKLVALIYLALQLGCIALTNFS) and 520 to 536 (LGFLLATTMVPTAALAK). The Cytoplasmic portion of the chain corresponds to 537–540 (PHGP). Residues 541–563 (RTLYAALLVLTSPAATLLGSLFL) traverse the membrane as a helical segment. Residues 564-597 (WRELQEAPLSLAEGWQLFLAALAQGVLEHHTYGA) are Lumenal-facing. A helical transmembrane segment spans residues 598–619 (LLFPLLSLGLYPCWLLFWNVLF). Over 620–621 (WK) the chain is Cytoplasmic.

Heteropentamer. Part of the GPI-anchor transamidase complex, consisting of PIGK, PIGT, PIGS, PIGU and GAA1. Interacts with PIGK. As to expression, ubiquitously expressed in fetal and adult tissues. Expressed at higher levels in fetal tissues than adult tissues.

Its subcellular location is the endoplasmic reticulum membrane. The protein operates within glycolipid biosynthesis; glycosylphosphatidylinositol-anchor biosynthesis. In terms of biological role, component of the glycosylphosphatidylinositol-anchor (GPI-anchor) transamidase (GPI-T) complex that catalyzes the formation of the linkage between a proprotein and a GPI-anchor and participates in GPI anchored protein biosynthesis. Binds GPI-anchor. This is GPI-anchor transamidase component GPAA1 from Homo sapiens (Human).